The primary structure comprises 211 residues: Abscisic acid receptor PYL7 (211 aa).

The interval 29 to 180 (HHCRENQCTS…NLKSLACVSE (152 aa)) is START-like. 2 disulfide bridges follow: cysteine 31–cysteine 161 and cysteine 36–cysteine 161. Abscisate contacts are provided by residues lysine 65, 93–98 (ATTSTE), 120–126 (RLKNYSS), and glutamate 145. Residues 89–93 (SGLPA) carry the Gate loop motif. The Latch loop signature appears at 119–121 (HRL).

This sequence belongs to the PYR/PYL/RCAR abscisic acid intracellular receptor family. As to quaternary structure, homodimer. Binds ABA on one subunit only. Binds to CARs protein in an ABA-independent manner, both at the plasma membrane and in the nucleus. Interacts with ABI1, and possibly with other PP2Cs.

The protein localises to the cytoplasm. It localises to the nucleus. The protein resides in the cell membrane. Its function is as follows. Receptor for abscisic acid (ABA) required for ABA-mediated responses such as stomatal closure and germination inhibition. Inhibits the activity of group-A protein phosphatases type 2C (PP2Cs) when activated by ABA. The protein is Abscisic acid receptor PYL7 (PYL7) of Arabidopsis thaliana (Mouse-ear cress).